A 550-amino-acid polypeptide reads, in one-letter code: Cell pattern formation-associated protein STUA (550 aa).

The HTH APSES-type domain occupies 86–192 (RVTATLWEDE…HNIGALLYHP (107 aa)). Residues 120–141 (GTKLLNVAGMTRGRRDGILKSE) constitute a DNA-binding region (H-T-H motif). Positions 246-266 (SLANGPQSLASTPQPLTNGSQ) are enriched in polar residues. Disordered stretches follow at residues 246–277 (SLAN…GMLK), 371–412 (HHQP…VKRR), 447–467 (KRRD…DHLN), and 527–550 (APVY…QSFG). A compositionally biased stretch (basic and acidic residues) spans 385 to 395 (RGRDEDDDVHR). Residues 517–546 (TVAASPSYPSAPVYDTGARPPSAISAPRRQ) form a nuclear localization domain region.

Belongs to the EFG1/PHD1/stuA family.

It localises to the nucleus. Its function is as follows. Transcription factor that regulates asexual reproduction. Binds the StuA-response elements (StRE) with the consensus sequence 5'-(A/T)CGCG(T/A)N(A/C)-3' at the promoters of target genes. Differentially regulates the development of macroconidia, microconidia, and chlamydospores. Acts as a positive regulator for the development of macroconidia and as a negative regulator for the development of chlamydospores. Involved in microconidium formation specifically in infected plants. This Fusarium oxysporum (Fusarium vascular wilt) protein is Cell pattern formation-associated protein STUA.